We begin with the raw amino-acid sequence, 258 residues long: Imidazole glycerol phosphate synthase subunit HisF (258 aa).

Active-site residues include aspartate 11 and aspartate 130.

The protein belongs to the HisA/HisF family. As to quaternary structure, heterodimer of HisH and HisF.

It is found in the cytoplasm. The catalysed reaction is 5-[(5-phospho-1-deoxy-D-ribulos-1-ylimino)methylamino]-1-(5-phospho-beta-D-ribosyl)imidazole-4-carboxamide + L-glutamine = D-erythro-1-(imidazol-4-yl)glycerol 3-phosphate + 5-amino-1-(5-phospho-beta-D-ribosyl)imidazole-4-carboxamide + L-glutamate + H(+). It participates in amino-acid biosynthesis; L-histidine biosynthesis; L-histidine from 5-phospho-alpha-D-ribose 1-diphosphate: step 5/9. In terms of biological role, IGPS catalyzes the conversion of PRFAR and glutamine to IGP, AICAR and glutamate. The HisF subunit catalyzes the cyclization activity that produces IGP and AICAR from PRFAR using the ammonia provided by the HisH subunit. The chain is Imidazole glycerol phosphate synthase subunit HisF from Xanthobacter autotrophicus (strain ATCC BAA-1158 / Py2).